A 401-amino-acid chain; its full sequence is MSKEKIAVAYSGGLDTSVMIKWLKDKYEGAEIVAVTGNLGQKMEVDNLEPKALATGAASFHFVDLRKTFVEDCIWKALKAGALYEDVYPLATALGRPILAKALVDVALAEGCTMLTHGCTGKGNDQVRFEVTFASLAPHMKVVAPLREWEFTSREQEITYALEHNIPVSATKKNPYSIDENIWGISIECGVLEDPMVPPPADAYQITTSPEEAPDKPTVVDIDFVEGIPVALDGQQMEGLDLIVKLNELGAMNGVGRLDMIENRVVGIKSREIYEAPAATILHFAHRELERLTLEKSVFQYKRNIGQDYANIIYNGTWFSPMREALDAFVDVTQKPVTGMVRLKLYKGNVTLLGRTSPNSLYNEELATYTEADTFNHKAAEGFIQLYGLGLKTYSEVNLGK.

Residue 9-17 coordinates ATP; it reads AYSGGLDTS. An L-citrulline-binding site is contributed by Tyr88. Gly118 is an ATP binding site. 3 residues coordinate L-aspartate: Thr120, Asn124, and Asp125. Asn124 is an L-citrulline binding site. L-citrulline-binding residues include Arg128, Ser177, Ser186, Glu262, and Tyr274.

It belongs to the argininosuccinate synthase family. Type 1 subfamily. As to quaternary structure, homotetramer.

The protein localises to the cytoplasm. The catalysed reaction is L-citrulline + L-aspartate + ATP = 2-(N(omega)-L-arginino)succinate + AMP + diphosphate + H(+). Its pathway is amino-acid biosynthesis; L-arginine biosynthesis; L-arginine from L-ornithine and carbamoyl phosphate: step 2/3. The polypeptide is Argininosuccinate synthase (Chlorobaculum parvum (strain DSM 263 / NCIMB 8327) (Chlorobium vibrioforme subsp. thiosulfatophilum)).